The sequence spans 337 residues: Junctional sarcoplasmic reticulum protein 1 (337 aa).

Residues 1 to 84 (MATRAMEELD…EKEPVSKVTS (84 aa)) form a mediates interaction with CACNA1S region. 2 disordered regions span residues 23–125 (SALA…ELPW) and 159–337 (EAPA…KGRD). Basic and acidic residues-rich tracts occupy residues 49-59 (SRSHDSQERVT) and 69-79 (TKPKKMEKEPV). Residues 165–180 (PESWASSSSSPKGPAS) are compositionally biased toward low complexity. Basic and acidic residues predominate over residues 199 to 213 (SKLEERVQIPRSEEA). The segment covering 214–225 (AEKDEWESEEAA) has biased composition (acidic residues). Basic and acidic residues-rich tracts occupy residues 236–277 (GPKE…RGAR), 285–309 (RRWEAREGGHRPWGRDSGAPEDRKR), and 316–325 (RRPDEEDRPL). Residues 326–337 (GRQKRRAGKGRD) show a composition bias toward basic residues.

Interacts with CACNA1S, CACNB1 and calsequestrin.

The protein localises to the sarcoplasmic reticulum membrane. It localises to the endoplasmic reticulum membrane. Its function is as follows. Involved in skeletal muscle excitation/contraction coupling (EC), probably acting as a regulator of the voltage-sensitive calcium channel CACNA1S. EC is a physiological process whereby an electrical signal (depolarization of the plasma membrane) is converted into a chemical signal, a calcium gradient, by the opening of ryanodine receptor calcium release channels. May regulate CACNA1S membrane targeting and activity. In Bos taurus (Bovine), this protein is Junctional sarcoplasmic reticulum protein 1 (JSRP1).